Reading from the N-terminus, the 354-residue chain is Uroporphyrinogen decarboxylase (354 aa).

Residues R27–R31, F46, D77, Y154, T209, and H327 each bind substrate.

This sequence belongs to the uroporphyrinogen decarboxylase family. As to quaternary structure, homodimer.

The protein resides in the cytoplasm. The enzyme catalyses uroporphyrinogen III + 4 H(+) = coproporphyrinogen III + 4 CO2. The protein operates within porphyrin-containing compound metabolism; protoporphyrin-IX biosynthesis; coproporphyrinogen-III from 5-aminolevulinate: step 4/4. In terms of biological role, catalyzes the decarboxylation of four acetate groups of uroporphyrinogen-III to yield coproporphyrinogen-III. This chain is Uroporphyrinogen decarboxylase, found in Salmonella typhimurium (strain LT2 / SGSC1412 / ATCC 700720).